A 207-amino-acid polypeptide reads, in one-letter code: Lipid A acyltransferase PagP (207 aa).

Positions 1 to 24 (MKFDLTTAYTLSIPLLASSGTVLA) are cleaved as a signal peptide. Active-site residues include histidine 79, aspartate 122, and serine 123.

This sequence belongs to the lipid A palmitoyltransferase family. As to quaternary structure, homodimer.

The protein resides in the cell outer membrane. It catalyses the reaction a lipid A + a 1,2-diacyl-sn-glycero-3-phosphocholine = a hepta-acyl lipid A + a 2-acyl-sn-glycero-3-phosphocholine. It carries out the reaction a lipid IVA + a 1,2-diacyl-sn-glycero-3-phosphocholine = a lipid IVB + a 2-acyl-sn-glycero-3-phosphocholine. The enzyme catalyses a lipid IIA + a 1,2-diacyl-sn-glycero-3-phosphocholine = a lipid IIB + a 2-acyl-sn-glycero-3-phosphocholine. Its function is as follows. Transfers a fatty acid residue from the sn-1 position of a phospholipid to the N-linked hydroxyfatty acid chain on the proximal unit of lipid A or its precursors. The protein is Lipid A acyltransferase PagP of Photorhabdus asymbiotica subsp. asymbiotica (strain ATCC 43949 / 3105-77) (Xenorhabdus luminescens (strain 2)).